The sequence spans 620 residues: Palmitoyltransferase ZDHHC17 (620 aa).

The Cytoplasmic segment spans residues 1 to 292 (MADALVGYEK…LKMDKEFRQK (292 aa)). ANK repeat units follow at residues 77 to 106 (ENVTLLHWAAINNRVDLVKYYISKGAIVDQ), 111 to 140 (LNSTPLHWATRQGHLSMVVQLMKYGADPSL), 144 to 173 (EGCSCVHLAAQFGHTSIVAYLIAKGQDVDM), 177 to 207 (NGMTPLMWAAYRTHSVDPTRLLLTFNVSVNL), 212 to 241 (HKNTALHWAVLAGNTTVISLLLEANANVDA), and 245 to 274 (KGETPLDLAKQRKNVWMINHLQEARQAKGY). 2 helical membrane-spanning segments follow: residues 293–313 (VMLGTPFLVIWLVGFIADLDI) and 314–334 (DSWLIKGVMYAVMWLVVQFLS). Residues 335–345 (KSFFDHSMHSA) lie on the Cytoplasmic side of the membrane. Residues 346–366 (LPLGIYLATKFWMYITWFYWF) traverse the membrane as a helical segment. Residues 367–369 (WND) lie on the Lumenal side of the membrane. A helical transmembrane segment spans residues 370–390 (LPFVTIHLPFLLNSLALFYNF). The Cytoplasmic portion of the chain corresponds to 391-469 (GKSWKSDPGI…NCVGSGNHRY (79 aa)). Residues 425 to 475 (IFCSTCLIRKPIRSKHCAVCNRCIAKFDHHCPWVGNCVGSGNHRYFMGYLF) enclose the DHHC domain. The active-site S-palmitoyl cysteine intermediate is the Cys455. Residues 470 to 490 (FMGYLFFLLCMICWMMYGCIC) traverse the membrane as a helical segment. Topologically, residues 491 to 504 (YWRIHCATSYTKDG) are lumenal. The helical transmembrane segment at 505–524 (FWIYITQIATCSPWMFWMFL) threads the bilayer. Residues 525 to 620 (NSVFHFMWVA…QTSGSGYQLV (96 aa)) are Cytoplasmic-facing.

This sequence belongs to the DHHC palmitoyltransferase family. AKR/ZDHHC17 subfamily. Autopalmitoylated.

It is found in the golgi apparatus membrane. Its subcellular location is the cytoplasmic vesicle membrane. The protein localises to the presynaptic cell membrane. The enzyme catalyses L-cysteinyl-[protein] + hexadecanoyl-CoA = S-hexadecanoyl-L-cysteinyl-[protein] + CoA. The catalysed reaction is L-cysteinyl-[protein] + tetradecanoyl-CoA = S-tetradecanoyl-L-cysteinyl-[protein] + CoA. It carries out the reaction L-cysteinyl-[protein] + octadecanoyl-CoA = S-octadecanoyl-L-cysteinyl-[protein] + CoA. In terms of biological role, palmitoyltransferase that catalyzes the addition of palmitate onto various protein substrates and is involved in a variety of cellular processes. Has no stringent fatty acid selectivity and in addition to palmitate can also transfer onto target proteins myristate from tetradecanoyl-CoA and stearate from octadecanoyl-CoA. Plays a role in axonogenesis. This is Palmitoyltransferase ZDHHC17 from Danio rerio (Zebrafish).